An 875-amino-acid chain; its full sequence is Alanine--tRNA ligase (875 aa).

Residues histidine 567, histidine 571, cysteine 669, and histidine 673 each coordinate Zn(2+).

It belongs to the class-II aminoacyl-tRNA synthetase family. Requires Zn(2+) as cofactor.

The protein localises to the cytoplasm. The enzyme catalyses tRNA(Ala) + L-alanine + ATP = L-alanyl-tRNA(Ala) + AMP + diphosphate. In terms of biological role, catalyzes the attachment of alanine to tRNA(Ala) in a two-step reaction: alanine is first activated by ATP to form Ala-AMP and then transferred to the acceptor end of tRNA(Ala). Also edits incorrectly charged Ser-tRNA(Ala) and Gly-tRNA(Ala) via its editing domain. This chain is Alanine--tRNA ligase, found in Geobacter sulfurreducens (strain ATCC 51573 / DSM 12127 / PCA).